A 214-amino-acid chain; its full sequence is Adenylate kinase (214 aa).

10-15 (GAGKGT) is a binding site for ATP. The tract at residues 30-59 (STGDMLRAAVKAGTELGKQAKEIMDAGKLV) is NMP. AMP is bound by residues Thr31, Arg36, 57–59 (KLV), 85–88 (GFPR), and Gln92. The interval 122 to 159 (GRRVHAASGRVYHVKFNPPKVEGKDDVTGEDLTIRKDD) is LID. ATP contacts are provided by residues Arg123 and 132–133 (VY). AMP contacts are provided by Arg156 and Arg167. Arg200 provides a ligand contact to ATP.

The protein belongs to the adenylate kinase family. In terms of assembly, monomer.

Its subcellular location is the cytoplasm. The enzyme catalyses AMP + ATP = 2 ADP. The protein operates within purine metabolism; AMP biosynthesis via salvage pathway; AMP from ADP: step 1/1. Functionally, catalyzes the reversible transfer of the terminal phosphate group between ATP and AMP. Plays an important role in cellular energy homeostasis and in adenine nucleotide metabolism. The polypeptide is Adenylate kinase (Pectobacterium carotovorum subsp. carotovorum (strain PC1)).